Reading from the N-terminus, the 619-residue chain is CREB-regulated transcription coactivator 3 (619 aa).

Positions 1–103 are required for interaction with HTLV-1 TAX; that stretch reads MAASPGSGSA…LVERPSRNRF (103 aa). Ser4 and Ser62 each carry phosphoserine. The disordered stretch occupies residues 103–150; the sequence is FHPLHRRSGDKPGRQFDGSAFGANYSSQPLDESWPRQQPPWKDEKHPG. Thr160 is modified (phosphothreonine). Ser162 carries the phosphoserine; by SIK2 modification. Positions 165-175 are enriched in polar residues; it reads ALHTSALSTKP. The disordered stretch occupies residues 165-185; sequence ALHTSALSTKPQDPYGGGGQS. Lys232 is covalently cross-linked (Glycyl lysine isopeptide (Lys-Gly) (interchain with G-Cter in SUMO2)). Residues Ser273, Ser329, Ser332, Ser370, Ser391, Ser396, Ser410, and Ser443 each carry the phosphoserine modification. The disordered stretch occupies residues 375–431; that stretch reads STTNLSGPSRRRQPPVSPLTLSPGPEAHQGFSRQLSSTSPLAPYPTSQMVSSDRSQL. The interval 380–401 is required for interaction with PPP2CA and PPP2R1A; the sequence is SGPSRRRQPPVSPLTLSPGPEA. The segment covering 405 to 431 has biased composition (polar residues); that stretch reads FSRQLSSTSPLAPYPTSQMVSSDRSQL.

Belongs to the TORC family. Binding, as a tetramer, through its N-terminal region, with the bZIP domain of CREB1 enhances recruitment of TAF4 to the promoter. 'Arg-314' in the bZIP domain of CREB1 is essential for this interaction. Interacts (when phosphorylated at Ser-162 and Se-273) with 14-3-3 proteins. Interacts with YWHAE. Interacts (when phosphorylated at Ser-391) with phosphatase PP2A catalytic subunit PPP2CA and regulatory subunits PPP2R1A and PPP2R2A. Interacts, via the N-terminal with the ankyrin repeats of BCL3, to form a complex with CREB1 on CRE and TxRE responsive elements and represses HTLV-1 LTR-mediated transcription. In terms of assembly, (Microbial infection) Interacts with HTLV-1 protein Tax; this interaction enhances tax transcriptional activity. In terms of processing, phosphorylation/dephosphorylation states of Ser-273 are required for regulating transduction of CREB activity. CRTCs/TORCs are inactive when phosphorylated, and active when dephosphorylated at this site. May be phosphorylated at Ser-391 by MAPK3/ERK1 and/or MAPK1/ERK2 or by some cyclin-dependent kinases such as CDK1,CDK2 or CDK5. Following adenylyl cyclase activation, dephosphorylated at Ser-162 and Ser-273 resulting in its dissociation from 14-3-3 proteins probably promoting CRTC3 translocation into the nucleus. In terms of tissue distribution, predominantly expressed in B and T lymphocytes. Highest levels in lung. Also expressed in brain, colon, heart, kidney, ovary, and prostate. Weak expression in liver, pancreas, muscle, small intestine, spleen and stomach.

The protein localises to the nucleus. The protein resides in the cytoplasm. Functionally, transcriptional coactivator for CREB1 which activates transcription through both consensus and variant cAMP response element (CRE) sites. Acts as a coactivator, in the SIK/TORC signaling pathway, being active when dephosphorylated and acts independently of CREB1 'Ser-133' phosphorylation. Enhances the interaction of CREB1 with TAF4. Regulates the expression of specific CREB-activated genes such as the steroidogenic gene, StAR. Potent coactivator of PPARGC1A and inducer of mitochondrial biogenesis in muscle cells. Also coactivator for TAX activation of the human T-cell leukemia virus type 1 (HTLV-1) long terminal repeats (LTR). The sequence is that of CREB-regulated transcription coactivator 3 (CRTC3) from Homo sapiens (Human).